The following is a 250-amino-acid chain: Ferritin-2, chloroplastic (250 aa).

The transit peptide at 1 to 43 (MLLRTAAASSLSLFNPNAEPSRSVPVLANNASRLVVRAAKGST) directs the protein to the chloroplast. Residues 44–76 (NHRALTGVIFEPFEEVKKELDLVPTVPQASLAR) form an extension peptide (EP) region. A Ferritin-like diiron domain is found at 77–230 (QKYVDESEAA…EYVAQLRRVG (154 aa)). Fe cation contacts are provided by glutamate 94, glutamate 129, histidine 132, glutamate 178, and glutamine 212.

The protein belongs to the ferritin family. In terms of assembly, oligomer of 24 subunits. There are two types of subunits: L (light) chain and H (heavy) chain. The major chain can be light or heavy, depending on the species and tissue type. The functional molecule forms a roughly spherical shell with a diameter of 12 nm and contains a central cavity into which the insoluble mineral iron core is deposited.

The protein localises to the plastid. The protein resides in the chloroplast. It catalyses the reaction 4 Fe(2+) + O2 + 4 H(+) = 4 Fe(3+) + 2 H2O. Functionally, stores iron in a soluble, non-toxic, readily available form. Important for iron homeostasis. Has ferroxidase activity. Iron is taken up in the ferrous form and deposited as ferric hydroxides after oxidation. The polypeptide is Ferritin-2, chloroplastic (PFE2) (Vigna unguiculata (Cowpea)).